The following is a 630-amino-acid chain: ATP-dependent zinc metalloprotease FtsH (630 aa).

Topologically, residues 1–7 are cytoplasmic; that stretch reads MNNFMKN. Residues 8-28 traverse the membrane as a helical segment; it reads IGFYLVLIALSILVAQFFVDT. The Periplasmic segment spans residues 29-111; it reads DVNTIVDTDV…KTEPEPTAPW (83 aa). Residues 112-132 traverse the membrane as a helical segment; that stretch reads WTGMLAYILPIILLIGAWFFI. Topologically, residues 133 to 630 are cytoplasmic; that stretch reads MQRMQGGGSQ…ENREHENNDK (498 aa). 203 to 210 provides a ligand contact to ATP; that stretch reads GPPGTGKT. H425 contacts Zn(2+). Residue E426 is part of the active site. Residues H429 and D501 each contribute to the Zn(2+) site. Residues 601–630 form a disordered region; sequence KLIKGEPLDDDSIDNSTDENENREHENNDK. Over residues 608-619 the composition is skewed to acidic residues; it reads LDDDSIDNSTDE. Residues 620-630 show a composition bias toward basic and acidic residues; that stretch reads NENREHENNDK.

The protein in the central section; belongs to the AAA ATPase family. In the C-terminal section; belongs to the peptidase M41 family. As to quaternary structure, homohexamer. The cofactor is Zn(2+).

Its subcellular location is the cell inner membrane. In terms of biological role, acts as a processive, ATP-dependent zinc metallopeptidase for both cytoplasmic and membrane proteins. Plays a role in the quality control of integral membrane proteins. The chain is ATP-dependent zinc metalloprotease FtsH from Halothermothrix orenii (strain H 168 / OCM 544 / DSM 9562).